A 137-amino-acid polypeptide reads, in one-letter code: 6,7-dimethyl-8-ribityllumazine synthase (137 aa).

5-amino-6-(D-ribitylamino)uracil-binding positions include Phe11, Ser43–Asp45, and Cys67–Ile69. Asp72–Thr73 lines the (2S)-2-hydroxy-3-oxobutyl phosphate pocket. Catalysis depends on His75, which acts as the Proton donor. Leu100 serves as a coordination point for 5-amino-6-(D-ribitylamino)uracil. A (2S)-2-hydroxy-3-oxobutyl phosphate-binding site is contributed by Arg115.

Belongs to the DMRL synthase family. As to quaternary structure, forms an icosahedral capsid composed of 60 subunits, arranged as a dodecamer of pentamers.

It carries out the reaction (2S)-2-hydroxy-3-oxobutyl phosphate + 5-amino-6-(D-ribitylamino)uracil = 6,7-dimethyl-8-(1-D-ribityl)lumazine + phosphate + 2 H2O + H(+). The protein operates within cofactor biosynthesis; riboflavin biosynthesis; riboflavin from 2-hydroxy-3-oxobutyl phosphate and 5-amino-6-(D-ribitylamino)uracil: step 1/2. Catalyzes the formation of 6,7-dimethyl-8-ribityllumazine by condensation of 5-amino-6-(D-ribitylamino)uracil with 3,4-dihydroxy-2-butanone 4-phosphate. This is the penultimate step in the biosynthesis of riboflavin. This chain is 6,7-dimethyl-8-ribityllumazine synthase, found in Methanococcus maripaludis (strain C5 / ATCC BAA-1333).